The following is a 310-amino-acid chain: Beta-ketoacyl-[acyl-carrier-protein] synthase III 1 (310 aa).

Active-site residues include cysteine 112 and histidine 235. Residues 236-240 (QANIR) are ACP-binding. Asparagine 265 is a catalytic residue.

It belongs to the thiolase-like superfamily. FabH family. In terms of assembly, homodimer.

It localises to the cytoplasm. It catalyses the reaction malonyl-[ACP] + acetyl-CoA + H(+) = 3-oxobutanoyl-[ACP] + CO2 + CoA. Its pathway is lipid metabolism; fatty acid biosynthesis. Functionally, catalyzes the condensation reaction of fatty acid synthesis by the addition to an acyl acceptor of two carbons from malonyl-ACP. Catalyzes the first condensation reaction which initiates fatty acid synthesis and may therefore play a role in governing the total rate of fatty acid production. Possesses both acetoacetyl-ACP synthase and acetyl transacylase activities. Its substrate specificity determines the biosynthesis of branched-chain and/or straight-chain of fatty acids. This Bacillus anthracis protein is Beta-ketoacyl-[acyl-carrier-protein] synthase III 1.